Here is a 239-residue protein sequence, read N- to C-terminus: Tetraspanin-9 (239 aa).

Residues 1 to 13 are Cytoplasmic-facing; that stretch reads MARGCLCCLKYMM. A helical transmembrane segment spans residues 14–34; it reads FLFNLIFWLCGCGLLGVGIWL. The Extracellular portion of the chain corresponds to 35 to 55; sequence SVSQGNFATFSPSFPSLSAAN. The helical transmembrane segment at 56 to 76 threads the bilayer; that stretch reads LVIAIGTIVMVTGFLGCLGAI. At 77–85 the chain is on the cytoplasmic side; sequence KENRCLLLS. A helical transmembrane segment spans residues 86-106; that stretch reads FFIVLLIILLAELILIILFFV. The Extracellular portion of the chain corresponds to 107–203; sequence YMDKVNENAR…VKMWFDDNKH (97 aa). Asn180 carries N-linked (GlcNAc...) asparagine glycosylation. The helical transmembrane segment at 204–224 threads the bilayer; that stretch reads VLGTVGMCILIMQILGMAFSM. Residues 225-239 are Cytoplasmic-facing; it reads TLFQHIHRTGKKYDA.

This sequence belongs to the tetraspanin (TM4SF) family. In terms of assembly, found in a complex with GP6. In terms of processing, glycosylated.

It localises to the membrane. The protein is Tetraspanin-9 (TSPAN9) of Sus scrofa (Pig).